Reading from the N-terminus, the 106-residue chain is uncharacterized protein (106 aa).

The next 2 helical transmembrane spans lie at 53–70 (LLLL…LDII) and 74–93 (ILGL…WTLI).

The protein localises to the cell membrane. This is an uncharacterized protein from Bacillus subtilis (strain 168).